Here is a 464-residue protein sequence, read N- to C-terminus: Asparagine--tRNA ligase (464 aa).

It belongs to the class-II aminoacyl-tRNA synthetase family. In terms of assembly, homodimer.

It is found in the cytoplasm. The enzyme catalyses tRNA(Asn) + L-asparagine + ATP = L-asparaginyl-tRNA(Asn) + AMP + diphosphate + H(+). The protein is Asparagine--tRNA ligase of Clostridium botulinum (strain Eklund 17B / Type B).